The sequence spans 99 residues: Nucleoid-associated protein UUR10_0100 (99 aa).

The protein belongs to the YbaB/EbfC family. As to quaternary structure, homodimer.

The protein resides in the cytoplasm. It localises to the nucleoid. Its function is as follows. Binds to DNA and alters its conformation. May be involved in regulation of gene expression, nucleoid organization and DNA protection. The polypeptide is Nucleoid-associated protein UUR10_0100 (Ureaplasma urealyticum serovar 10 (strain ATCC 33699 / Western)).